The chain runs to 500 residues: Ent-cassadiene C11-alpha-hydroxylase 1 (500 aa).

The helical transmembrane segment at serine 4 to leucine 24 threads the bilayer. A heme-binding site is contributed by cysteine 442.

Belongs to the cytochrome P450 family. Heme serves as cofactor.

The protein resides in the membrane. The enzyme catalyses ent-cassa-12,15-diene + reduced [NADPH--hemoprotein reductase] + O2 = ent-11beta-hydroxycassa-12,15-diene + oxidized [NADPH--hemoprotein reductase] + H2O + H(+). Its function is as follows. Enzyme of the diterpenoid metabolism involved in the biosynthesis of antibacterial oryzalides such as phytocassane. Can use ent-cassadiene as substrate, but not C11-alpha-hydroxy-ent-cassadiene, ent-pimaradiene, ent-sandaracopimaradiene, ent-kaurene, ent-isokaurene, syn-pimaradiene, syn-stemarene, syn-stemodene. The protein is Ent-cassadiene C11-alpha-hydroxylase 1 of Oryza sativa subsp. japonica (Rice).